The following is a 398-amino-acid chain: Acetate kinase (398 aa).

Residue Asn-8 participates in Mg(2+) binding. Lys-15 serves as a coordination point for ATP. Arg-89 serves as a coordination point for substrate. Residue Asp-146 is the Proton donor/acceptor of the active site. ATP is bound by residues 206–210 (HIGNG), 283–285 (DMR), and 331–335 (GMGEN). Glu-383 contributes to the Mg(2+) binding site.

Belongs to the acetokinase family. As to quaternary structure, homodimer. The cofactor is Mg(2+). Mn(2+) serves as cofactor.

It is found in the cytoplasm. The enzyme catalyses acetate + ATP = acetyl phosphate + ADP. Its pathway is metabolic intermediate biosynthesis; acetyl-CoA biosynthesis; acetyl-CoA from acetate: step 1/2. Its function is as follows. Catalyzes the formation of acetyl phosphate from acetate and ATP. Can also catalyze the reverse reaction. The polypeptide is Acetate kinase (Streptococcus pyogenes serotype M4 (strain MGAS10750)).